The primary structure comprises 447 residues: Sulfoquinovose isomerase (447 aa).

It belongs to the SqvD family.

It catalyses the reaction 6-sulfo-beta-D-quinovose = 6-deoxy-6-sulfo-D-fructose. Its function is as follows. Part of the sulfo-TK pathway, a D-sulfoquinovose degradation pathway that produces 2-hydroxyethane-1-sulfonate (isethionate). Catalyzes the isomerization of sulfoquinovose (SQ) to 6-deoxy-6-sulfo-D-fructose (SF). This Clostridium sp. (strain MSTE9) protein is Sulfoquinovose isomerase.